A 456-amino-acid polypeptide reads, in one-letter code: Cysteine synthase 2 (456 aa).

Residues 9–29 traverse the membrane as a helical segment; it reads VYGTVALTAAFAAGILVTLGF.

It belongs to the cysteine synthase/cystathionine beta-synthase family. Requires pyridoxal 5'-phosphate as cofactor.

The protein resides in the mitochondrion outer membrane. The catalysed reaction is O-acetyl-L-serine + hydrogen sulfide = L-cysteine + acetate. In terms of biological role, putative cysteine synthase that catalyzes the conversion of O-acetyl-L-serine (OAS) into cysteine, the last step in the cysteine biosynthesis pathway. However, in contrast to cysteine synthase cys-17, this CS-like protein may not function in cysteine biosynthesis. The chain is Cysteine synthase 2 from Neurospora crassa (strain ATCC 24698 / 74-OR23-1A / CBS 708.71 / DSM 1257 / FGSC 987).